Reading from the N-terminus, the 529-residue chain is Tyrosine--tRNA ligase, cytoplasmic (529 aa).

Position 39 (Y39) interacts with L-tyrosine. The 'HIGH' region signature appears at 44–52; that stretch reads TTGKPHVAY. Residues Y166, Q170, D173, and Q188 each coordinate L-tyrosine. The 'KMSKS' region signature appears at 222–226; sequence KMSSS. Positions 242 to 247 match the Nuclear localization signal motif; that stretch reads KKKLKK. The segment at 335–362 is disordered; sequence KLTSSAYPEPSKNKGGVKGNPKQTTDDD. In terms of domain architecture, tRNA-binding spans 365-469; sequence IPSRLDIRVG…EGSAAGDRVY (105 aa).

Belongs to the class-I aminoacyl-tRNA synthetase family. Homodimer.

It localises to the cytoplasm. Its subcellular location is the nucleus. It carries out the reaction tRNA(Tyr) + L-tyrosine + ATP = L-tyrosyl-tRNA(Tyr) + AMP + diphosphate + H(+). Functionally, catalyzes the attachment of tyrosine to tRNA(Tyr) in a two-step reaction: tyrosine is first activated by ATP to form Tyr-AMP and then transferred to the acceptor end of tRNA(Tyr). The polypeptide is Tyrosine--tRNA ligase, cytoplasmic (yars1) (Danio rerio (Zebrafish)).